The chain runs to 597 residues: Inactive metallocarboxypeptidase ECM14 (597 aa).

The first 21 residues, 1–21, serve as a signal peptide directing secretion; the sequence is MRLFTHGQVLALLAFVNTISA. Positions 22-174 are excised as a propeptide; sequence TPSFSTNSYP…QTIYESYPSP (153 aa). The segment covering 170–179 has biased composition (low complexity); the sequence is SYPSPSQSPS. A disordered region spans residues 170-189; sequence SYPSPSQSPSGRERGFLPSG. A Peptidase M14 domain is found at 202-522; it reads NYQPLSVIVP…NAVMMLGRFL (321 aa). Residues His-264 and Glu-267 each coordinate Zn(2+). Substrate is bound by residues 264–267, Arg-322, and 339–340; these read HARE and DR. A disulfide bridge links Cys-333 with Cys-356. An N-linked (GlcNAc...) asparagine glycan is attached at Asn-349. Residue His-396 participates in Zn(2+) binding. 397 to 398 contributes to the substrate binding site; it reads SY. Positions 543 to 597 are disordered; the sequence is KDDKPILNDDDDDDADTNDDGIGRKDDSWIPDEYKGDNDRDESDGGWAFRRLRKR. A compositionally biased stretch (acidic residues) spans 550 to 561; that stretch reads NDDDDDDADTND. The segment covering 563 to 580 has biased composition (basic and acidic residues); it reads GIGRKDDSWIPDEYKGDN.

This sequence belongs to the peptidase M14 family. It depends on Zn(2+) as a cofactor.

It localises to the vacuole. The protein localises to the secreted. Inactive carboxypeptidase that may play a role in cell wall organization and biogenesis. This is Inactive metallocarboxypeptidase ECM14 (ECM14) from Ajellomyces capsulatus (strain G186AR / H82 / ATCC MYA-2454 / RMSCC 2432) (Darling's disease fungus).